The sequence spans 704 residues: Polyribonucleotide nucleotidyltransferase (704 aa).

2 residues coordinate Mg(2+): Asp-488 and Asp-494. Residues 555–614 enclose the KH domain; sequence PRITTIKINPEKIRDVIGKGGATIRALTEETGTTIELDDDGTVKIASSNGEATKEAIRRI. The S1 motif domain occupies 624-692; it reads GTVYNGKVVR…RQGRVRLSMK (69 aa).

Belongs to the polyribonucleotide nucleotidyltransferase family. Component of the RNA degradosome, which is a multiprotein complex involved in RNA processing and mRNA degradation. Requires Mg(2+) as cofactor.

The protein resides in the cytoplasm. The enzyme catalyses RNA(n+1) + phosphate = RNA(n) + a ribonucleoside 5'-diphosphate. In terms of biological role, involved in mRNA degradation. Catalyzes the phosphorolysis of single-stranded polyribonucleotides processively in the 3'- to 5'-direction. The chain is Polyribonucleotide nucleotidyltransferase from Shewanella halifaxensis (strain HAW-EB4).